Consider the following 61-residue polypeptide: Small ribosomal subunit protein uS14 (61 aa).

Zn(2+)-binding residues include cysteine 24, cysteine 27, cysteine 40, and cysteine 43.

This sequence belongs to the universal ribosomal protein uS14 family. Zinc-binding uS14 subfamily. As to quaternary structure, part of the 30S ribosomal subunit. Contacts proteins S3 and S10. Zn(2+) serves as cofactor.

Binds 16S rRNA, required for the assembly of 30S particles and may also be responsible for determining the conformation of the 16S rRNA at the A site. This Mycobacterium sp. (strain JLS) protein is Small ribosomal subunit protein uS14.